Reading from the N-terminus, the 929-residue chain is Probable LRR receptor-like serine/threonine-protein kinase At1g67720 (929 aa).

The N-terminal stretch at 1-21 (MGLCLAQLAVTCLFLVPFVLS) is a signal peptide. Topologically, residues 22 to 531 (QVTEFVSIDC…NEAQRKHFWQ (510 aa)) are extracellular. N-linked (GlcNAc...) asparagine glycans are attached at residues Asn-36, Asn-173, Asn-236, Asn-293, Asn-320, Asn-332, and Asn-407. LRR repeat units follow at residues 413 to 437 (PPRV…INYM), 438 to 460 (EALT…MSKL), 461 to 484 (VNLK…LAHL), and 485 to 508 (PNLQ…LLKG). The N-linked (GlcNAc...) asparagine glycan is linked to Asn-494. The chain crosses the membrane as a helical span at residues 532 to 552 (ILGISIAAVAILLLLVGGSLV). The Cytoplasmic segment spans residues 553 to 929 (LLCALRKTKR…SRNSLAPAAR (377 aa)). Residues 606-880 (DNFSKKVGRG…EVIVAIQDAI (275 aa)) enclose the Protein kinase domain. ATP contacts are provided by residues 612-620 (VGRGSFGSV) and Lys-634. Tyr-679 is modified (phosphotyrosine). Residue Asp-731 is the Proton acceptor of the active site. A phosphoserine mark is found at Ser-735 and Ser-764. Thr-770 is subject to Phosphothreonine. At Tyr-778 the chain carries Phosphotyrosine.

Belongs to the protein kinase superfamily. Ser/Thr protein kinase family.

It is found in the membrane. The catalysed reaction is L-seryl-[protein] + ATP = O-phospho-L-seryl-[protein] + ADP + H(+). The enzyme catalyses L-threonyl-[protein] + ATP = O-phospho-L-threonyl-[protein] + ADP + H(+). This chain is Probable LRR receptor-like serine/threonine-protein kinase At1g67720, found in Arabidopsis thaliana (Mouse-ear cress).